Here is a 303-residue protein sequence, read N- to C-terminus: Putative fimbrium subunit Fim1C (303 aa).

The signal sequence occupies residues 1 to 22; it reads MKKQALICALLATVLLPGCSED.

The protein belongs to the bacteroidetes fimbrillin superfamily. Mfa-like family. As to quaternary structure, may be part of the fimbrial tip.

Its subcellular location is the fimbrium. Its function is as follows. Putative component of the fimbrium tip. Fimbriae are filamentous appendages on the cell surface that mediate cell adhesion and biofilm formation. The protein is Putative fimbrium subunit Fim1C (fim1C) of Bacteroides uniformis (strain ATCC 8492 / DSM 6597 / CCUG 4942 / CIP 103695 / JCM 5828 / KCTC 5204 / NCTC 13054 / VPI 0061).